An 808-amino-acid polypeptide reads, in one-letter code: Phospholipase D alpha 1 (808 aa).

The C2 domain occupies 1–125 (MAKTLLHGTL…LEGEEVDKWV (125 aa)). Position 186 (D186) interacts with Ca(2+). The PLD phosphodiesterase 1 domain maps to 326–364 (TIFTHHQKIVVVDSEMPTSGSENRRVVSFVGGIDLCDGR). Active-site residues include H331, K333, and D338. H331 lines the a 1,2-diacyl-sn-glycero-3-phosphate pocket. Positions 370 and 404 each coordinate Ca(2+). Residues 654-681 (FMIYVHAKMMIVDDEYIIIGSANINQRS) form the PLD phosphodiesterase 2 domain. Residues H659, K661, and D666 contribute to the active site. H659 is a binding site for a 1,2-diacyl-sn-glycero-3-phosphate. E720 contacts Ca(2+).

This sequence belongs to the phospholipase D family. C2-PLD subfamily. Requires Ca(2+) as cofactor.

It catalyses the reaction a 1,2-diacyl-sn-glycero-3-phosphocholine + H2O = a 1,2-diacyl-sn-glycero-3-phosphate + choline + H(+). Its function is as follows. Hydrolyzes glycerol-phospholipids at the terminal phosphodiesteric bond. Plays an important role in various cellular processes. This is Phospholipase D alpha 1 (PLD1) from Spuriopimpinella brachycarpa (Chamnamul).